The following is a 138-amino-acid chain: Probable non-specific lipid-transfer protein 1 (138 aa).

The first 36 residues, 1-36 (MRTVSARSSVALVVIVAAVLVWTSSASVAPAPAPGS), serve as a signal peptide directing secretion. 4 disulfide bridges follow: cysteine 40–cysteine 88, cysteine 50–cysteine 65, cysteine 66–cysteine 111, and cysteine 86–cysteine 127.

It belongs to the plant LTP family.

In terms of biological role, plant non-specific lipid-transfer proteins transfer phospholipids as well as galactolipids across membranes. May play a role in wax or cutin deposition in the cell walls of expanding epidermal cells and certain secretory tissues. The chain is Probable non-specific lipid-transfer protein 1 from Parietaria judaica (Pellitory-of-the-wall).